The primary structure comprises 455 residues: Probable glycine dehydrogenase (decarboxylating) subunit 1 (455 aa).

This sequence belongs to the GcvP family. N-terminal subunit subfamily. As to quaternary structure, the glycine cleavage system is composed of four proteins: P, T, L and H. In this organism, the P 'protein' is a heterodimer of two subunits.

It carries out the reaction N(6)-[(R)-lipoyl]-L-lysyl-[glycine-cleavage complex H protein] + glycine + H(+) = N(6)-[(R)-S(8)-aminomethyldihydrolipoyl]-L-lysyl-[glycine-cleavage complex H protein] + CO2. Functionally, the glycine cleavage system catalyzes the degradation of glycine. The P protein binds the alpha-amino group of glycine through its pyridoxal phosphate cofactor; CO(2) is released and the remaining methylamine moiety is then transferred to the lipoamide cofactor of the H protein. This Saccharolobus islandicus (strain Y.N.15.51 / Yellowstone #2) (Sulfolobus islandicus) protein is Probable glycine dehydrogenase (decarboxylating) subunit 1.